Consider the following 184-residue polypeptide: ADP-ribosylation factor-like protein 2 (184 aa).

G2 carries N-myristoyl glycine lipidation. GTP-binding positions include 23–30 (GLDNAGKT), 66–70 (DVGGQ), and 125–128 (NKQD).

This sequence belongs to the small GTPase superfamily. Arf family. Ubiquitously expressed.

Its function is as follows. GTP-binding protein involved in protein trafficking; may modulate vesicle budding and uncoating within the Golgi apparatus. This Drosophila melanogaster (Fruit fly) protein is ADP-ribosylation factor-like protein 2 (Arl2).